Consider the following 249-residue polypeptide: Sugar fermentation stimulation protein homolog (249 aa).

It belongs to the SfsA family.

In Synechococcus sp. (strain RCC307), this protein is Sugar fermentation stimulation protein homolog.